The sequence spans 874 residues: Probable leucine--tRNA ligase, cytoplasmic (874 aa).

The 'HIGH' region motif lies at 36–46; it reads PYMNGRLHLGH. The 'KMSKS' region signature appears at 544–548; that stretch reads KMSKS. K547 contributes to the ATP binding site.

It belongs to the class-I aminoacyl-tRNA synthetase family.

The protein resides in the cytoplasm. The catalysed reaction is tRNA(Leu) + L-leucine + ATP = L-leucyl-tRNA(Leu) + AMP + diphosphate. This Encephalitozoon cuniculi (strain GB-M1) (Microsporidian parasite) protein is Probable leucine--tRNA ligase, cytoplasmic.